The primary structure comprises 364 residues: Long-wave-sensitive opsin 1 (364 aa).

The Extracellular portion of the chain corresponds to 1–58; the sequence is MTQRWGPQRLAGGQPQAGLEESTQASIFTYTNSNATRDPFEGPNYHIAPRWVYHLTSA. An O-linked (GlcNAc) serine glycan is attached at S22. N-linked (GlcNAc...) asparagine glycosylation is present at N34. A helical membrane pass occupies residues 59–79; the sequence is WMIFVVIASVFTNGLVLVATM. The Cytoplasmic segment spans residues 80 to 90; sequence RFKKLRHPLNW. A helical membrane pass occupies residues 91–111; the sequence is ILVNLAIADLAETIIASTISV. Topologically, residues 112–126 are extracellular; sequence VNQIYGYFVLGHPLC. A disulfide bridge links C126 with C203. A helical membrane pass occupies residues 127–147; that stretch reads VVEGYTVSLCGITGLWSLAII. The Cytoplasmic segment spans residues 148 to 168; sequence SWERWLVVCKPFGNVRFDAKL. Residues 169-189 form a helical membrane-spanning segment; sequence AIAGIAFSWIWAAVWTAPPIF. Residues 190–219 are Extracellular-facing; it reads GWSRYWPHGLKTSCGPDVFSGSSYPGVQSY. A helical membrane pass occupies residues 220–240; that stretch reads MIVLMTTCCIIPLSVIILCYL. Residues 241 to 269 are Cytoplasmic-facing; the sequence is QVWLAIRAVAKQQKESESTQKAEKEVTRM. The chain crosses the membrane as a helical span at residues 270-290; that stretch reads VVVMVLAYCLCWGPYTFFACF. At 291–301 the chain is on the extracellular side; that stretch reads AAAHPGYAFHP. A helical transmembrane segment spans residues 302-324; the sequence is LVAALPAYFAKSATIYNPIIYVF. N6-(retinylidene)lysine is present on K312. Residues 325-364 are Cytoplasmic-facing; the sequence is MNRQFRNCILQLFGKKVDDSSELSSASRTEASSVSSVSPA.

Belongs to the G-protein coupled receptor 1 family. Opsin subfamily. In terms of processing, phosphorylated on some or all of the serine and threonine residues present in the C-terminal region. As to expression, the three color pigments are found in the cone photoreceptor cells.

The protein resides in the membrane. Functionally, visual pigments are the light-absorbing molecules that mediate vision. They consist of an apoprotein, opsin, covalently linked to cis-retinal. The sequence is that of Long-wave-sensitive opsin 1 (OPN1LW) from Canis lupus familiaris (Dog).